An 85-amino-acid polypeptide reads, in one-letter code: N.vectensis toxin 1 6 (85 aa).

An N-terminal signal peptide occupies residues 1–20 (MASFKIVIVCLALLVAVACA). Residues 21–36 (RRRDMMSDDELDYHYS) constitute a propeptide that is removed on maturation. Disulfide bonds link cysteine 42–cysteine 82, cysteine 44–cysteine 72, and cysteine 65–cysteine 83.

The protein belongs to the sea anemone sodium channel inhibitory toxin family. Type II subfamily. As to expression, expressed in ectodermal glands and in clumps outside of the extodermal layer. Is not expressed in nematocytes. In adult female tissues, shows similar expression levels in mesenteries (gametes-producing tissue), tentacles, pharynx and physa.

It localises to the secreted. Its function is as follows. Binds to site 3 of voltage-gated sodium channels and inhibits the inactivation process. Is highly active on DmNav1/TipE (drosophila) and is only extremely weakly active on rat Nav1.4-beta-1/SCN4A-SCN1B, and on human Nav1.5-beta-1/SCN5A-beta-1. This reveals high specificity for arthropod over mammalian channels. In vivo, when released into the medium, this recombinant toxin induces impaired swimming, paralysis and death of the crustacean A.nauplii within several hours. Also causes paralysis of cherry shrimps immediately after injection at very low doses. Its effect on zebrafish (D.rerio) larvae is also rapid, since it induces tail twitching accompanied by impaired swimming after 20 minutes and complete paralysis within 45 minutes. It has also been observed to cause death of zebrafish larvae within 1 hour. The protein is N.vectensis toxin 1 6 of Nematostella vectensis (Starlet sea anemone).